Consider the following 298-residue polypeptide: Ketohexokinase (298 aa).

D15, G41, N42, and N45 together coordinate beta-D-fructose. Residues R108, 226-229 (AEEG), and 255-258 (GAGD) each bind ATP. D258 provides a ligand contact to beta-D-fructose.

This sequence belongs to the carbohydrate kinase PfkB family. In terms of assembly, homodimer.

It catalyses the reaction beta-D-fructose + ATP = beta-D-fructose 1-phosphate + ADP + H(+). It functions in the pathway carbohydrate metabolism; fructose metabolism. With respect to regulation, requires potassium. Inhibition by ADP. In terms of biological role, catalyzes the phosphorylation of the ketose sugar fructose to fructose-1-phosphate. The sequence is that of Ketohexokinase from Mus musculus (Mouse).